We begin with the raw amino-acid sequence, 582 residues long: Semenogelin-2 (582 aa).

Residues 1–23 (MKSIILFVLSLLLILEKQAAVMG) form the signal peptide. Disordered stretches follow at residues 25–65 (KGGS…SSSI), 91–157 (HKTT…GISS), 171–192 (LSKEQASASGAQKGRTQGGSQS), 272–366 (NLNQ…KDIQ), and 393–557 (SNQD…HNTV). Residues 50-59 (GQKDKQHTES) show a composition bias toward basic and acidic residues. Residues 111-134 (QKGRDHVKPKRHFRLIVIHRKGGQ) are compositionally biased toward basic residues. 2 stretches are compositionally biased toward polar residues: residues 137 to 157 (HGTQNPSQNQGNSPSGKGISS) and 174 to 192 (EQASASGAQKGRTQGGSQS). A compositionally biased stretch (basic and acidic residues) spans 293–310 (TEERQFNHGEKSVQKDVP). A compositionally biased stretch (polar residues) spans 325-335 (KSQNQVSIPSQ). 4 stretches are compositionally biased toward basic and acidic residues: residues 336-345 (DQEHGHKENK), 353-366 (TEERRLNCGEKDIQ), 396-405 (DQEHGHKENK), and 413-426 (TEERRLNGGEKDIQ). Composition is skewed to polar residues over residues 427 to 437 (KSVSKGSISIQ) and 445 to 455 (KSQNQVTIPSQ). The segment covering 456-465 (DQEHGHKENK) has biased composition (basic and acidic residues). Polar residues-rich tracts occupy residues 487–498 (KDVSQSSLSFQT) and 506–529 (SQIQTPNPNQDQWSGLNAKGNSGK). Over residues 530–546 (SADREQDLLSHEQESRY) the composition is skewed to basic and acidic residues. The segment covering 547 to 557 (QQKSSGAHNTV) has biased composition (polar residues).

It belongs to the semenogelin family. Interacts with SERPINA5.

Its subcellular location is the secreted. Functionally, participates in the formation of a gel matrix (sperm coagulum) entrapping the accessory gland secretions and ejaculated spermatozoa. In Colobus guereza (Mantled guereza), this protein is Semenogelin-2 (SEMG2).